The following is a 197-amino-acid chain: Nucleoid occlusion factor SlmA (197 aa).

Positions 7–67 (INRREHILQC…GLIEFIEESL (61 aa)) constitute an HTH tetR-type domain. The segment at residues 30-49 (TTAKLAAEVGVSEAALYRHF) is a DNA-binding region (H-T-H motif). Positions 109-136 (DALLGENERLRSRISQLFAKIETHLKQI) form a coiled coil.

It belongs to the nucleoid occlusion factor SlmA family. Homodimer. Interacts with FtsZ.

The protein localises to the cytoplasm. It localises to the nucleoid. Functionally, required for nucleoid occlusion (NO) phenomenon, which prevents Z-ring formation and cell division over the nucleoid. Acts as a DNA-associated cell division inhibitor that binds simultaneously chromosomal DNA and FtsZ, and disrupts the assembly of FtsZ polymers. SlmA-DNA-binding sequences (SBS) are dispersed on non-Ter regions of the chromosome, preventing FtsZ polymerization at these regions. The sequence is that of Nucleoid occlusion factor SlmA from Shewanella halifaxensis (strain HAW-EB4).